The following is a 341-amino-acid chain: MFNNSSKILFITIMIIGTLITVTSNSWLGAWMGLEINLLSFIPLLSDNNNLMSTEASLKYFLTQVLASTVLLFSSILLMLKNNMNNEINESFTSMIIMSALLLKSGAAPFHFWFPNMMEGLTWMNALMLMTWQKIAPLMLISYLNIKYLLLISVILSVIIGAIGGLNQTSLRKLMAFSSINHLGWMLSSLMISESIWLIYFFFYSFLSFVLTFMFNIFKLFHLNQLFSWFVNSKILKFTLFMNFLSLGGLPPFLGFLPKWLVIQQLTLCNQYFMLTLMMMSTLITLFFYLRICYSAFMMNYFENNWIMKMNMNSINYNMYMIMTFFSIFGLFLISLFYFMF.

The next 9 membrane-spanning stretches (helical) occupy residues Ile-8–Leu-28, Tyr-60–Leu-80, Met-95–Pro-115, Leu-121–Ile-141, Ile-146–Leu-166, Ser-195–Phe-215, Phe-238–Pro-258, Phe-273–Cys-293, and Met-321–Phe-341.

It belongs to the complex I subunit 2 family.

The protein localises to the mitochondrion inner membrane. It carries out the reaction a ubiquinone + NADH + 5 H(+)(in) = a ubiquinol + NAD(+) + 4 H(+)(out). Core subunit of the mitochondrial membrane respiratory chain NADH dehydrogenase (Complex I) that is believed to belong to the minimal assembly required for catalysis. Complex I functions in the transfer of electrons from NADH to the respiratory chain. The immediate electron acceptor for the enzyme is believed to be ubiquinone. The polypeptide is NADH-ubiquinone oxidoreductase chain 2 (mt:ND2) (Drosophila melanogaster (Fruit fly)).